A 257-amino-acid chain; its full sequence is Homeobox protein ceh-36 (257 aa).

Residues 33–49 (SATTSSTTMAPMAPNSE) are compositionally biased toward low complexity. Disordered stretches follow at residues 33-63 (SATT…TSFN) and 113-156 (DRNN…GTPE). Positions 55-117 (GRRERTSFNR…NRRAKDRNNK (63 aa)) form a DNA-binding region, homeobox. Residues 123–137 (HPGSTSSRSSNGSPH) show a composition bias toward low complexity.

The protein belongs to the paired homeobox family. In terms of assembly, interacts with sox-2. As to expression, expressed in ASE and AWC chemosensory neurons. Expressed left-right asymmetrically in the embryo, in the grandmother cell and the mother cell to the MI pharyngeal motorneuron but in neither analogous precursors of the e3D neuron.

It is found in the nucleus. Functionally, probable transcription factor, acting as a progenitor identity factor regulating the development of lineally-related embryonic cells including glial, excretory and neuronal cells. Mediates chemosensory function of ASE and AWC neurons. In ASE neurons, required to diversify the fate of the ASEL neurons from the ASER neurons. Acts cell-autonomously to establish a neuronal left right asymmetry, possibly promoting asymmetric expression of the helix-loop-helix proteins ngn-1 and hlh-2. In cooperation with the transcription factor sox-2, required for the differentiation of AWC olfactory neurons. May regulate the expression of sox-2 in AWC olfactory neurons. The polypeptide is Homeobox protein ceh-36 (Caenorhabditis elegans).